We begin with the raw amino-acid sequence, 437 residues long: GTPase Obg (437 aa).

In terms of domain architecture, Obg spans 2–160 (SMFLDTAKIS…RELQLELKIL (159 aa)). The disordered stretch occupies residues 127-146 (GNIRFATPRNPAPEIAENGE). In terms of domain architecture, OBG-type G spans 161–338 (ADVGLVGFPS…LLEATAELLD (178 aa)). GTP contacts are provided by residues 167 to 174 (GFPSVGKS), 192 to 196 (FTTIV), 214 to 217 (DLPG), 284 to 287 (NKMD), and 319 to 321 (SSL). The Mg(2+) site is built by Ser-174 and Thr-194. An OCT domain is found at 359 to 437 (GFNEEERPFE…IGNFEFEFVD (79 aa)).

Belongs to the TRAFAC class OBG-HflX-like GTPase superfamily. OBG GTPase family. In terms of assembly, monomer. The cofactor is Mg(2+).

It is found in the cytoplasm. In terms of biological role, an essential GTPase which binds GTP, GDP and possibly (p)ppGpp with moderate affinity, with high nucleotide exchange rates and a fairly low GTP hydrolysis rate. Plays a role in control of the cell cycle, stress response, ribosome biogenesis and in those bacteria that undergo differentiation, in morphogenesis control. The polypeptide is GTPase Obg (Streptococcus thermophilus (strain ATCC BAA-491 / LMD-9)).